A 96-amino-acid chain; its full sequence is Large ribosomal subunit protein eL14 (96 aa).

It belongs to the eukaryotic ribosomal protein eL14 family.

This Sulfurisphaera tokodaii (strain DSM 16993 / JCM 10545 / NBRC 100140 / 7) (Sulfolobus tokodaii) protein is Large ribosomal subunit protein eL14.